We begin with the raw amino-acid sequence, 320 residues long: NAD-dependent protein deacylase SIR2rp2 (320 aa).

The transit peptide at 1–22 directs the protein to the mitochondrion; that stretch reads MRPAGTLASFLERCSARKRGRG. Residues 23 to 320 form the Deacetylase sirtuin-type domain; it reads CVVLTGAGCS…MFFRRKTIQL (298 aa). Residues 28–48 and 108–111 each bind NAD(+); these read GAGC…GQYH and QNVD. The Proton acceptor role is filled by His-144. 4 residues coordinate Zn(2+): Cys-152, Cys-155, Cys-207, and Cys-210. Residues 248–250, 274–276, and Gly-294 each bind NAD(+); these read GTS and NAG.

This sequence belongs to the sirtuin family. Class II subfamily. Requires Zn(2+) as cofactor.

It is found in the mitochondrion matrix. It carries out the reaction N(6)-acetyl-L-lysyl-[protein] + NAD(+) + H2O = 2''-O-acetyl-ADP-D-ribose + nicotinamide + L-lysyl-[protein]. Functionally, NAD-dependent protein deacylase. Catalyzes the NAD-dependent hydrolysis of acyl groups from lysine residues. This is NAD-dependent protein deacylase SIR2rp2 (SIR2rp2) from Leishmania major.